A 324-amino-acid chain; its full sequence is UDP-N-acetylenolpyruvoylglucosamine reductase (324 aa).

The region spanning 36 to 203 (FRAGGLAELM…THAIFEGYAE (168 aa)) is the FAD-binding PCMH-type domain. Residue Arg-183 is part of the active site. Residue Ser-232 is the Proton donor of the active site. Glu-302 is a catalytic residue.

This sequence belongs to the MurB family. Requires FAD as cofactor.

The protein localises to the cytoplasm. It catalyses the reaction UDP-N-acetyl-alpha-D-muramate + NADP(+) = UDP-N-acetyl-3-O-(1-carboxyvinyl)-alpha-D-glucosamine + NADPH + H(+). It participates in cell wall biogenesis; peptidoglycan biosynthesis. In terms of biological role, cell wall formation. This Rhizobium meliloti (strain 1021) (Ensifer meliloti) protein is UDP-N-acetylenolpyruvoylglucosamine reductase.